Consider the following 473-residue polypeptide: Bifunctional protein HldE (473 aa).

A ribokinase region spans residues 1 to 318 (MKLTLPRYDQ…RAVQREEGSE (318 aa)). 194–197 (NLHE) is an ATP binding site. The active site involves Asp263. The segment at 343-473 (FTNGCFDILH…TAIVEKIRNK (131 aa)) is cytidylyltransferase.

In the N-terminal section; belongs to the carbohydrate kinase PfkB family. The protein in the C-terminal section; belongs to the cytidylyltransferase family. As to quaternary structure, homodimer.

It carries out the reaction D-glycero-beta-D-manno-heptose 7-phosphate + ATP = D-glycero-beta-D-manno-heptose 1,7-bisphosphate + ADP + H(+). The enzyme catalyses D-glycero-beta-D-manno-heptose 1-phosphate + ATP + H(+) = ADP-D-glycero-beta-D-manno-heptose + diphosphate. It participates in nucleotide-sugar biosynthesis; ADP-L-glycero-beta-D-manno-heptose biosynthesis; ADP-L-glycero-beta-D-manno-heptose from D-glycero-beta-D-manno-heptose 7-phosphate: step 1/4. Its pathway is nucleotide-sugar biosynthesis; ADP-L-glycero-beta-D-manno-heptose biosynthesis; ADP-L-glycero-beta-D-manno-heptose from D-glycero-beta-D-manno-heptose 7-phosphate: step 3/4. Its function is as follows. Catalyzes the phosphorylation of D-glycero-D-manno-heptose 7-phosphate at the C-1 position to selectively form D-glycero-beta-D-manno-heptose-1,7-bisphosphate. In terms of biological role, catalyzes the ADP transfer from ATP to D-glycero-beta-D-manno-heptose 1-phosphate, yielding ADP-D-glycero-beta-D-manno-heptose. The protein is Bifunctional protein HldE of Ectopseudomonas mendocina (strain ymp) (Pseudomonas mendocina).